Here is an 85-residue protein sequence, read N- to C-terminus: Alpha-toxin Amm8 (85 aa).

A signal peptide spans Met1–Ser19. Positions Lys21–Asn83 constitute an LCN-type CS-alpha/beta domain. Intrachain disulfides connect Cys31-Cys82, Cys35-Cys55, Cys41-Cys65, and Cys45-Cys67. Arg85 is a propeptide (removed by a carboxypeptidase).

Belongs to the long (4 C-C) scorpion toxin superfamily. Sodium channel inhibitor family. Alpha subfamily. As to expression, expressed by the venom gland.

The protein resides in the secreted. In terms of biological role, alpha toxins bind voltage-independently at site-3 of sodium channels (Nav) and inhibit the inactivation of the activated channels, thereby blocking neuronal transmission. The toxin principally slows the inactivation process of TTX-sensitive sodium channels. It discriminates neuronal versus muscular sodium channel, as it is more potent on rat brain Nav1.2/SCN2A (EC(50)=29 nM) than on rat skeletal muscle Nav1.4/SCN4A (EC(50)=416 nM). It also shows a weak activity on Nav1.7/SCN9A (EC(50)=1.76 uM). In vivo, the toxin produces pain hypersensibility to mechanical and thermal stimuli. It also exhibits potent analgesic activity (when injected intraperitoneally), increasing hot plate and tail flick withdrawal latencies in a dose-dependent fashion. This paradoxical analgesic action, is significantly suppressed by opioid receptor antagonists, suggesting a pain-induced analgesia mechanism that involves an endogenous opioid system. This led to hypothesis that pain relief induced by peripheral administration of Amm VIII may result from sensitization of primary afferent neurons and subsequent activation of an opioid-dependent noxious inhibitory control. The chain is Alpha-toxin Amm8 from Androctonus mauritanicus mauritanicus (Scorpion).